Here is a 339-residue protein sequence, read N- to C-terminus: tRNA N6-adenosine threonylcarbamoyltransferase (339 aa).

His-111 and His-115 together coordinate Fe cation. Substrate-binding positions include 134 to 138 (LVSGG), Asp-167, Gly-180, and Asn-272. Residue Asp-300 participates in Fe cation binding.

This sequence belongs to the KAE1 / TsaD family. It depends on Fe(2+) as a cofactor.

Its subcellular location is the cytoplasm. It carries out the reaction L-threonylcarbamoyladenylate + adenosine(37) in tRNA = N(6)-L-threonylcarbamoyladenosine(37) in tRNA + AMP + H(+). Its function is as follows. Required for the formation of a threonylcarbamoyl group on adenosine at position 37 (t(6)A37) in tRNAs that read codons beginning with adenine. Is involved in the transfer of the threonylcarbamoyl moiety of threonylcarbamoyl-AMP (TC-AMP) to the N6 group of A37, together with TsaE and TsaB. TsaD likely plays a direct catalytic role in this reaction. The polypeptide is tRNA N6-adenosine threonylcarbamoyltransferase (Sodalis glossinidius (strain morsitans)).